Reading from the N-terminus, the 466-residue chain is Alpha-1,3-mannosyltransferase CMT1 (466 aa).

The disordered stretch occupies residues Met1 to Ser23. At Met1–Ser33 the chain is on the cytoplasmic side. A helical; Signal-anchor for type II membrane protein transmembrane segment spans residues Pro34–Pro54. At Asp55 to Glu466 the chain is on the lumenal side.

Mg(2+) serves as cofactor. Mn(2+) is required as a cofactor. Requires Co(2+) as cofactor.

The protein resides in the golgi apparatus membrane. The protein operates within protein modification; protein glycosylation. Its function is as follows. Responsible for addition of mannose residues in an alpha-1,3 linkage to a polymannosly precursor. May be involved in synthesis of capsule glucuronoxylomannan. The sequence is that of Alpha-1,3-mannosyltransferase CMT1 from Cryptococcus neoformans var. neoformans serotype D (strain JEC21 / ATCC MYA-565) (Filobasidiella neoformans).